Consider the following 103-residue polypeptide: MANKQKIRIRLKAFDHQVLDQSAEKIVETAKRTGAKVSGPVPLPTEREVITILRAPHKYKDSREQFEMRTHKRLIDILLPTPKTVDALMRLDLPAGVDIEIKL.

Belongs to the universal ribosomal protein uS10 family. As to quaternary structure, part of the 30S ribosomal subunit.

In terms of biological role, involved in the binding of tRNA to the ribosomes. The sequence is that of Small ribosomal subunit protein uS10 from Acetivibrio thermocellus (strain ATCC 27405 / DSM 1237 / JCM 9322 / NBRC 103400 / NCIMB 10682 / NRRL B-4536 / VPI 7372) (Clostridium thermocellum).